A 50-amino-acid polypeptide reads, in one-letter code: Large ribosomal subunit protein bL33A (50 aa).

The protein belongs to the bacterial ribosomal protein bL33 family.

This is Large ribosomal subunit protein bL33A from Streptococcus thermophilus (strain CNRZ 1066).